The primary structure comprises 104 residues: MIFSQVTLQVEKTVKKKNGAEDNVIKPITLPAVKQRISQSRLDEFSMIGLGKNVRYELNGIGEMEDLIFNYFLDEKGETFKRTTWERNPKNNKMILEGLVSNGI.

Belongs to the skunalikevirus head completion protein 1 family.

It localises to the virion. Its function is as follows. Probable head completion protein that exhibits an open central channel for viral DNA ejection. Part of the head-tail connector by binding to the portal protein and to the head completion protein 2. Plays a role in morphogenesis of the virion capsid after genome packaging. The chain is Probable head completion protein 1 from Lactococcus lactis (Lactococcus lactis bacteriophage p2).